A 146-amino-acid chain; its full sequence is Large ribosomal subunit protein uL15 (146 aa).

Residues 1–56 (MKLHELKAAEGANKASKRVGRGTGSGLGKTSGRGQNGQNSRSGGGVRPGFEGGQMP) are disordered. 2 stretches are compositionally biased toward gly residues: residues 21-35 (RGTG…GRGQ) and 42-52 (SGGGVRPGFEG).

This sequence belongs to the universal ribosomal protein uL15 family. Part of the 50S ribosomal subunit.

Functionally, binds to the 23S rRNA. This Clostridium botulinum (strain ATCC 19397 / Type A) protein is Large ribosomal subunit protein uL15.